A 578-amino-acid chain; its full sequence is A-type ATP synthase subunit A (578 aa).

ATP is bound at residue 228 to 235 (GPFGSGKT).

The protein belongs to the ATPase alpha/beta chains family. Has multiple subunits with at least A(3), B(3), C, D, E, F, H, I and proteolipid K(x).

It is found in the cell membrane. The catalysed reaction is ATP + H2O + 4 H(+)(in) = ADP + phosphate + 5 H(+)(out). Component of the A-type ATP synthase that produces ATP from ADP in the presence of a proton gradient across the membrane. The A chain is the catalytic subunit. This Methanococcoides burtonii (strain DSM 6242 / NBRC 107633 / OCM 468 / ACE-M) protein is A-type ATP synthase subunit A.